The sequence spans 258 residues: MLIVVSPAKTLDYESELPALKTTQPRLLDDSEALIARARQLSPADISSLMGVSDKIAHLNAERFSLWERPFNKKNARPAAFAFKGDVYTGLDIESFNDHQLSEAQQRFRMLSGLYGVLRPLDLMQAYRLEMGTKLDNERGKDLYAFWGNTITELLNKDMKDAKTDVLVNLASNEYFKAVKKKAVAGTIIEPVFQDEKNGNYKIISFYAKKARGLMAAWIIKKGLKDPAKLTQFDVAGYCYCEAQSTALRPVFRRPEQG.

This sequence belongs to the UPF0246 family.

This Alcanivorax borkumensis (strain ATCC 700651 / DSM 11573 / NCIMB 13689 / SK2) protein is UPF0246 protein ABO_1338.